A 515-amino-acid polypeptide reads, in one-letter code: Maturase K (515 aa).

Belongs to the intron maturase 2 family. MatK subfamily.

It localises to the plastid. The protein resides in the chloroplast. In terms of biological role, usually encoded in the trnK tRNA gene intron. Probably assists in splicing its own and other chloroplast group II introns. This chain is Maturase K, found in Pinus armandii (Chinese white pine).